We begin with the raw amino-acid sequence, 147 residues long: NADH-ubiquinone oxidoreductase chain 3 (147 aa).

The next 3 helical transmembrane spans lie at leucine 6–alanine 26, alanine 60–leucine 80, and threonine 84–phenylalanine 104.

Belongs to the complex I subunit 3 family.

The protein localises to the mitochondrion membrane. The enzyme catalyses a ubiquinone + NADH + 5 H(+)(in) = a ubiquinol + NAD(+) + 4 H(+)(out). Its function is as follows. Core subunit of the mitochondrial membrane respiratory chain NADH dehydrogenase (Complex I) that is believed to belong to the minimal assembly required for catalysis. Complex I functions in the transfer of electrons from NADH to the respiratory chain. The immediate electron acceptor for the enzyme is believed to be ubiquinone. This chain is NADH-ubiquinone oxidoreductase chain 3 (ndh-3), found in Neurospora crassa (strain ATCC 24698 / 74-OR23-1A / CBS 708.71 / DSM 1257 / FGSC 987).